Consider the following 298-residue polypeptide: uncharacterized protein (298 aa).

Residue Asp-119 is part of the active site.

It belongs to the pseudouridine synthase RluA family.

It carries out the reaction a uridine in RNA = a pseudouridine in RNA. This is an uncharacterized protein from Helicobacter pylori (strain ATCC 700392 / 26695) (Campylobacter pylori).